Consider the following 505-residue polypeptide: Apolipoprotein N-acyltransferase (505 aa).

A run of 6 helical transmembrane segments spans residues 15 to 46 (AAFV…LLLL), 55 to 75 (ALIA…WVHV), 89 to 109 (LFLM…FGWL), 129 to 149 (LWLI…WLWL), 161 to 181 (FAPI…AGSL), and 192 to 212 (MACI…MQWV). The region spanning 225–471 (IQGNIEQGLK…TGVLKATVTP (247 aa)) is the CN hydrolase domain. The active-site Proton acceptor is E264. K330 is an active-site residue. The active-site Nucleophile is the C382. The chain crosses the membrane as a helical span at residues 479–499 (FLWGTTPLYLWVGLAAGFAFW).

The protein belongs to the CN hydrolase family. Apolipoprotein N-acyltransferase subfamily.

It localises to the cell inner membrane. It catalyses the reaction N-terminal S-1,2-diacyl-sn-glyceryl-L-cysteinyl-[lipoprotein] + a glycerophospholipid = N-acyl-S-1,2-diacyl-sn-glyceryl-L-cysteinyl-[lipoprotein] + a 2-acyl-sn-glycero-3-phospholipid + H(+). It functions in the pathway protein modification; lipoprotein biosynthesis (N-acyl transfer). Its function is as follows. Catalyzes the phospholipid dependent N-acylation of the N-terminal cysteine of apolipoprotein, the last step in lipoprotein maturation. The sequence is that of Apolipoprotein N-acyltransferase from Vibrio cholerae serotype O1 (strain ATCC 39315 / El Tor Inaba N16961).